We begin with the raw amino-acid sequence, 295 residues long: F-box only protein 6 (295 aa).

The F-box domain occupies 1–48; that stretch reads MVHINELPENILLELFIHIPAPQLLRNCRLVCRLWRDLIDVVSLWKRK. One can recognise an FBA domain in the interval 69–250; that stretch reads FYILCSLQRN…VTNSSIIISH (182 aa). Residues serine 249 and serine 276 each carry the phosphoserine modification. Position 280 is a phosphothreonine (threonine 280).

As to quaternary structure, interacts with CHEK1 and CUL1. Part of a SCF (SKP1-cullin-F-box) protein ligase complex. Interacts with VCP. Present in liver and kidney (at protein level). Widely expressed.

It localises to the cytoplasm. Its pathway is protein modification; protein ubiquitination. Functionally, substrate-recognition component of some SCF (SKP1-CUL1-F-box protein)-type E3 ubiquitin ligase complexes. Involved in DNA damage response by specifically recognizing activated CHEK1 (phosphorylated on 'Ser-345'), promoting its ubiquitination and degradation. Ubiquitination of CHEK1 is required to ensure that activated CHEK1 does not accumulate as cells progress through S phase, or when replication forks encounter transient impediments during normal DNA replication. Involved in endoplasmic reticulum-associated degradation pathway (ERAD) for misfolded lumenal proteins by recognizing and binding sugar chains on unfolded glycoproteins that are retrotranslocated into the cytosol and promoting their ubiquitination and subsequent degradation. Able to recognize and bind denatured glycoproteins, which are modified with not only high-mannose but also complex-type oligosaccharides. Also recognizes sulfated glycans. This is F-box only protein 6 (Fbxo6) from Mus musculus (Mouse).